A 90-amino-acid polypeptide reads, in one-letter code: Small ribosomal subunit protein uS17 (90 aa).

This sequence belongs to the universal ribosomal protein uS17 family. As to quaternary structure, part of the 30S ribosomal subunit.

In terms of biological role, one of the primary rRNA binding proteins, it binds specifically to the 5'-end of 16S ribosomal RNA. The protein is Small ribosomal subunit protein uS17 of Burkholderia cenocepacia (strain ATCC BAA-245 / DSM 16553 / LMG 16656 / NCTC 13227 / J2315 / CF5610) (Burkholderia cepacia (strain J2315)).